The chain runs to 246 residues: DNA repair protein RecO (246 aa).

This sequence belongs to the RecO family.

In terms of biological role, involved in DNA repair and RecF pathway recombination. The chain is DNA repair protein RecO from Marinobacter nauticus (strain ATCC 700491 / DSM 11845 / VT8) (Marinobacter aquaeolei).